A 343-amino-acid polypeptide reads, in one-letter code: TATA box-binding protein-like 2 (343 aa).

The segment at 71–152 is disordered; sequence PDEVTQENKD…SDSLSLASIT (82 aa). Residues 76-90 are compositionally biased toward basic and acidic residues; the sequence is QENKDQPVISKHETE. Low complexity predominate over residues 94–127; the sequence is ESQSPQSRLPSPSEQDVGLGLNSSSLSNSHSQLH. Polar residues predominate over residues 143-152; that stretch reads SDSLSLASIT.

This sequence belongs to the TBP family. In terms of assembly, interacts with TAF3. As to expression, ubiquitously expressed in all tissues examined with highest levels in heart, lung, ovary, spleen and testes.

The protein localises to the cytoplasm. It localises to the nucleus. Transcription factor required in complex with TAF3 for the differentiation of myoblasts into myocytes. The complex replaces TFIID at specific promoters at an early stage in the differentiation process. The chain is TATA box-binding protein-like 2 from Homo sapiens (Human).